The sequence spans 73 residues: RNA-binding protein Hfq (73 aa).

One can recognise a Sm domain in the interval 8 to 68; it reads DQFLNQIRKE…ISTFAPQKNV (61 aa).

Belongs to the Hfq family. In terms of assembly, homohexamer.

RNA chaperone that binds small regulatory RNA (sRNAs) and mRNAs to facilitate mRNA translational regulation in response to envelope stress, environmental stress and changes in metabolite concentrations. Also binds with high specificity to tRNAs. In Bacillus licheniformis (strain ATCC 14580 / DSM 13 / JCM 2505 / CCUG 7422 / NBRC 12200 / NCIMB 9375 / NCTC 10341 / NRRL NRS-1264 / Gibson 46), this protein is RNA-binding protein Hfq.